Here is a 1035-residue protein sequence, read N- to C-terminus: Tyrosine-protein kinase-like otk (1035 aa).

The signal sequence occupies residues 1 to 23; that stretch reads MDMDVMMISMCILASTLMAPGWA. 5 Ig-like C2-type domains span residues 24–109, 110–199, 251–365, 368–464, and 469–559; these read STSG…REAS, PPAK…RVMS, PEDL…APLN, PGLL…VSIN, and PKFS…VQLV. Over 24-582 the chain is Extracellular; the sequence is STSGFLRVPQ…GGDGFLVTRA (559 aa). 5 cysteine pairs are disulfide-bonded: C47/C96, C138/C188, C276/C354, C399/C448, and C491/C543. N336, N418, N430, N445, N513, and N525 each carry an N-linked (GlcNAc...) asparagine glycan. Residues 583–603 form a helical membrane-spanning segment; that stretch reads VLITMTVALAYIVLVVGLMLW. At 604-1035 the chain is on the cytoplasmic side; sequence CRYRRQARKA…SKAMQSVAEK (432 aa). Disordered regions lie at residues 623–683 and 721–775; these read AGGD…KSVY and AQSD…KEEE. The segment covering 658-676 has biased composition (polar residues); that stretch reads KSNGDAQKSDDTACSQQSR. At S681 the chain carries Phosphoserine. One can recognise a Protein kinase; inactive domain in the interval 693–1029; the sequence is LSELLQIGRG…QLGSALSKAM (337 aa). The segment covering 723 to 734 has biased composition (basic and acidic residues); the sequence is SDKDADTEKQHS. The segment covering 766 to 775 has biased composition (acidic residues); it reads DDIEEIKEEE.

The protein belongs to the protein kinase superfamily. Tyr protein kinase family. Insulin receptor subfamily. Interacts with plexA; component of a receptor complex that mediates the repulsive signaling in response to Semaphorin ligands.

Its subcellular location is the cell membrane. Its function is as follows. Acts as a calcium-dependent, homophilic cell adhesion molecule that regulates neural recognition during the development of the nervous system. Component of the repulsive Plexin signaling response to regulate motor axon guidance at the embryonic stage. Also component of a receptor complex that is required in the adult visual system to innervate the lamina layer; specific targeting of R1-R6 axons. This Drosophila persimilis (Fruit fly) protein is Tyrosine-protein kinase-like otk.